We begin with the raw amino-acid sequence, 316 residues long: MSQKEQTLMTPYLQFNRHQWAALRDSVPMTLTEEEITRLKGINEDLSLEEVAEIYLPLSRLLNFYISSNLRRQAVLEQFLGTNGQRIPYIISIAGSVAVGKSTTARVLQALLSRWPEHRHVELITTDGFLHPNSVLKERGLMKKKGFPQSYDMHRLVKFVSDLKSGVPQATAPVYSHLIYDVIPNGDKTVAQPDILILEGLNVLQSGMDYPHDPHHVFVSDFVDFSIYVDAPEELLKSWYINRFLKFREGAFTDPDSYFHNYAKLSKEEAVDIATSLWNEINLMNLKENILPTRERASLIMTKSANHSVNQVRLRK.

95–102 provides a ligand contact to ATP; the sequence is GSVAVGKS.

This sequence belongs to the prokaryotic pantothenate kinase family.

The protein resides in the cytoplasm. The enzyme catalyses (R)-pantothenate + ATP = (R)-4'-phosphopantothenate + ADP + H(+). Its pathway is cofactor biosynthesis; coenzyme A biosynthesis; CoA from (R)-pantothenate: step 1/5. This Klebsiella pneumoniae subsp. pneumoniae (strain ATCC 700721 / MGH 78578) protein is Pantothenate kinase.